The following is a 464-amino-acid chain: Cell division protein FtsA (464 aa).

The interval 392 to 464 (EVIESDKDSE…FKKLMKSLFE (73 aa)) is disordered. Over residues 416 to 455 (KKENDEVAPEAPREESYEDRENHLEDEQQTEGKAKEESKF) the composition is skewed to basic and acidic residues.

It belongs to the FtsA/MreB family. In terms of assembly, self-interacts. Interacts with FtsZ.

The protein localises to the cell membrane. Cell division protein that is involved in the assembly of the Z ring. May serve as a membrane anchor for the Z ring. The chain is Cell division protein FtsA from Staphylococcus epidermidis (strain ATCC 35984 / DSM 28319 / BCRC 17069 / CCUG 31568 / BM 3577 / RP62A).